The sequence spans 545 residues: Protein FAR1-RELATED SEQUENCE 9 (545 aa).

The 44-residue stretch at 22–65 (LNYLKRRQLENPGFLYAIEDDCGNVFWADPTCRLNYTYFGDTLV) folds into the FAR1 domain. Residues 66-150 (FDTTYRRGKR…RVFSQTRLRF (85 aa)) enclose the MULE domain. The segment at 345 to 381 (HTVSFDSLEVKANCSCQMFEYSGIICRHILAVFSAKN) adopts an SWIM-type zinc-finger fold. A disordered region spans residues 460 to 495 (SNRTPGTRLPNGEAYPSEEARETANATNHPGGEKER). The stretch at 492 to 545 (EKERTILELTAELERTGQRCEVYRANLLSILRDMEEQKFQLSLKVQNARLSLKE) forms a coiled coil.

The protein belongs to the FHY3/FAR1 family. In terms of tissue distribution, expressed in hypocotyls, rosette and cauline leaves, inflorescences stems, flowers and siliques.

The protein localises to the nucleus. Its function is as follows. Putative transcription activator involved in regulating light control of development. May act as a negative regulator specific to phyB signaling. The sequence is that of Protein FAR1-RELATED SEQUENCE 9 (FRS9) from Arabidopsis thaliana (Mouse-ear cress).